The following is an 873-amino-acid chain: Leucine--tRNA ligase (873 aa).

A 'HIGH' region motif is present at residues 43-53; sequence PYPSGSLHMGH. The 'KMSKS' region signature appears at 624-628; sequence TMSKS. An ATP-binding site is contributed by Lys627.

It belongs to the class-I aminoacyl-tRNA synthetase family.

The protein localises to the cytoplasm. The catalysed reaction is tRNA(Leu) + L-leucine + ATP = L-leucyl-tRNA(Leu) + AMP + diphosphate. The polypeptide is Leucine--tRNA ligase (Synechococcus sp. (strain JA-3-3Ab) (Cyanobacteria bacterium Yellowstone A-Prime)).